The following is a 254-amino-acid chain: Phosphonates import ATP-binding protein PhnC 2 (254 aa).

The ABC transporter domain maps to Leu4–Gln248. ATP is bound at residue Gly37–Ser44.

It belongs to the ABC transporter superfamily. Phosphonates importer (TC 3.A.1.9.1) family. In terms of assembly, the complex is composed of two ATP-binding proteins (PhnC), two transmembrane proteins (PhnE) and a solute-binding protein (PhnD).

It is found in the cell membrane. The catalysed reaction is phosphonate(out) + ATP + H2O = phosphonate(in) + ADP + phosphate + H(+). Its function is as follows. Part of the ABC transporter complex PhnCDE involved in phosphonates import. Responsible for energy coupling to the transport system. In Oceanobacillus iheyensis (strain DSM 14371 / CIP 107618 / JCM 11309 / KCTC 3954 / HTE831), this protein is Phosphonates import ATP-binding protein PhnC 2.